A 505-amino-acid chain; its full sequence is ATP synthase subunit alpha, chloroplastic (505 aa).

170-177 (GDRQTGKT) provides a ligand contact to ATP.

It belongs to the ATPase alpha/beta chains family. F-type ATPases have 2 components, CF(1) - the catalytic core - and CF(0) - the membrane proton channel. CF(1) has five subunits: alpha(3), beta(3), gamma(1), delta(1), epsilon(1). CF(0) has four main subunits: a, b, b' and c.

The protein resides in the plastid. It localises to the chloroplast thylakoid membrane. The enzyme catalyses ATP + H2O + 4 H(+)(in) = ADP + phosphate + 5 H(+)(out). Functionally, produces ATP from ADP in the presence of a proton gradient across the membrane. The alpha chain is a regulatory subunit. The sequence is that of ATP synthase subunit alpha, chloroplastic from Zygnema circumcarinatum (Green alga).